The following is a 105-amino-acid chain: Nitrogen fixation nifHD region glnB-like protein 1 (105 aa).

Belongs to the P(II) protein family.

Could be involved in the regulation of nitrogen fixation. The chain is Nitrogen fixation nifHD region glnB-like protein 1 (glnBI) from Methanococcus maripaludis (strain DSM 14266 / JCM 13030 / NBRC 101832 / S2 / LL).